A 128-amino-acid chain; its full sequence is Adrenodoxin homolog (128 aa).

The 104-residue stretch at 12-115 folds into the 2Fe-2S ferredoxin-type domain; it reads EQIRIFFKTM…NAVFTVPRAT (104 aa). [2Fe-2S] cluster-binding residues include cysteine 50, cysteine 56, cysteine 59, and cysteine 96.

This sequence belongs to the adrenodoxin/putidaredoxin family. Requires [2Fe-2S] cluster as cofactor.

The protein resides in the mitosome. Functionally, ferredoxins are iron-sulfur proteins that transfer electrons in a wide variety of metabolic reactions. This Encephalitozoon cuniculi (strain GB-M1) (Microsporidian parasite) protein is Adrenodoxin homolog.